A 29-amino-acid chain; its full sequence is U1-pseudomyrmecitoxin-Pt1 subunit SS1 (29 aa).

Belongs to the myrmexin family. Heterodimer composed of subunit SS1 and subunit LS1 (U1-PSDTX-Pt1b), and heterodimer composed of subunit SS1 and LS2 (U1-PSDTX-Pt1a); disulfide-linked. In terms of tissue distribution, expressed by the venom gland.

The protein localises to the secreted. This heterodimer may have anti-inflammatory properties, since the myrmexin complex (composed of 6 SS-LS heterodimers) inhibits carrageenin-induced edema in a dose-dependent manner (after subcutaneous injection into rats). In Pseudomyrmex triplarinus (Ant), this protein is U1-pseudomyrmecitoxin-Pt1 subunit SS1.